The chain runs to 141 residues: Nucleoside diphosphate kinase (141 aa).

Residues K11, F59, R87, T93, R104, and N114 each contribute to the ATP site. Residue H117 is the Pros-phosphohistidine intermediate of the active site.

The protein belongs to the NDK family. In terms of assembly, homotetramer. The cofactor is Mg(2+).

It localises to the cytoplasm. It catalyses the reaction a 2'-deoxyribonucleoside 5'-diphosphate + ATP = a 2'-deoxyribonucleoside 5'-triphosphate + ADP. It carries out the reaction a ribonucleoside 5'-diphosphate + ATP = a ribonucleoside 5'-triphosphate + ADP. Functionally, major role in the synthesis of nucleoside triphosphates other than ATP. The ATP gamma phosphate is transferred to the NDP beta phosphate via a ping-pong mechanism, using a phosphorylated active-site intermediate. The polypeptide is Nucleoside diphosphate kinase (Xylella fastidiosa (strain M23)).